Reading from the N-terminus, the 497-residue chain is ATP-dependent RNA helicase CshA (497 aa).

The short motif at 1 to 29 (MKFSELGLSDSLLKAIKRSGYEEATPIQE) is the Q motif element. Residues 32–202 (IPMVLEGKDV…VQFMSDPETV (171 aa)) form the Helicase ATP-binding domain. ATP is bound at residue 45–52 (AQTGTGKT). Positions 150–153 (DEAD) match the DEAD box motif. A Helicase C-terminal domain is found at 228 to 373 (DIMTRLIDVQ…PLKPPTAEEA (146 aa)). A disordered region spans residues 425–497 (AASEVPVKIT…SFNIRHRKEN (73 aa)). The span at 448-458 (RNGNRNNSHGG) shows a compositional bias: low complexity. 2 stretches are compositionally biased toward basic residues: residues 459–473 (NHYR…QHGS) and 481–497 (KSHS…RKEN).

This sequence belongs to the DEAD box helicase family. CshA subfamily. Oligomerizes, may be a member of the RNA degradosome.

It is found in the cytoplasm. Its subcellular location is the cell membrane. It catalyses the reaction ATP + H2O = ADP + phosphate + H(+). Its function is as follows. DEAD-box RNA helicase possibly involved in RNA degradation. Unwinds dsRNA in both 5'- and 3'-directions, has RNA-dependent ATPase activity. Over-expression leads to cell aggregation. The sequence is that of ATP-dependent RNA helicase CshA from Limosilactobacillus reuteri (Lactobacillus reuteri).